The following is a 427-amino-acid chain: Serine--tRNA ligase (427 aa).

228–230 (TSE) serves as a coordination point for L-serine. 259–261 (RSE) is an ATP binding site. Glutamate 282 contributes to the L-serine binding site. Residue 346 to 349 (EISS) participates in ATP binding. Serine 384 is an L-serine binding site.

Belongs to the class-II aminoacyl-tRNA synthetase family. Type-1 seryl-tRNA synthetase subfamily. In terms of assembly, homodimer. The tRNA molecule binds across the dimer.

It is found in the cytoplasm. The catalysed reaction is tRNA(Ser) + L-serine + ATP = L-seryl-tRNA(Ser) + AMP + diphosphate + H(+). The enzyme catalyses tRNA(Sec) + L-serine + ATP = L-seryl-tRNA(Sec) + AMP + diphosphate + H(+). It functions in the pathway aminoacyl-tRNA biosynthesis; selenocysteinyl-tRNA(Sec) biosynthesis; L-seryl-tRNA(Sec) from L-serine and tRNA(Sec): step 1/1. In terms of biological role, catalyzes the attachment of serine to tRNA(Ser). Is also able to aminoacylate tRNA(Sec) with serine, to form the misacylated tRNA L-seryl-tRNA(Sec), which will be further converted into selenocysteinyl-tRNA(Sec). The sequence is that of Serine--tRNA ligase from Ehrlichia ruminantium (strain Welgevonden).